The sequence spans 351 residues: MLPRAVAHISAAALDHNLSALAQRSGTRLLLPVKADAYGHGMELVGRLAAAHPDVWGLAVATPQEAETLARLDLGKPLLLLTPPAPEELGALADLGVRLPVSTLAEVEALPAHAQAHLKVDTGMNRLGARPADAVAVGRALAERGQLEGVYTHFATADEPDLSFALTQLVRFRSVLDALPPVLAHCANGGGVLSFGRIEGMSLARPGLAAYGYVPEHLRHVCALRPVMTVRARVNQLHTAYPGETVSYGALWRAERETGVAVVGMGYADGYPRNATGRAAVLIGGERRPVLGRICMDQMMVDVTGLDVGVGDWAELWGEGDLSVTDVARWGDTIEYEVLTGLGSRVERRVG.

Lys-34 functions as the Proton acceptor; specific for D-alanine in the catalytic mechanism. Position 34 is an N6-(pyridoxal phosphate)lysine (Lys-34). Arg-126 provides a ligand contact to substrate. Residue Tyr-248 is the Proton acceptor; specific for L-alanine of the active site. Met-296 is a binding site for substrate.

It belongs to the alanine racemase family. The cofactor is pyridoxal 5'-phosphate.

The enzyme catalyses L-alanine = D-alanine. It functions in the pathway amino-acid biosynthesis; D-alanine biosynthesis; D-alanine from L-alanine: step 1/1. Its function is as follows. Catalyzes the interconversion of L-alanine and D-alanine. May also act on other amino acids. This is Alanine racemase (alr) from Deinococcus radiodurans (strain ATCC 13939 / DSM 20539 / JCM 16871 / CCUG 27074 / LMG 4051 / NBRC 15346 / NCIMB 9279 / VKM B-1422 / R1).